The chain runs to 231 residues: Uracil-DNA glycosylase (231 aa).

D74 functions as the Proton acceptor in the catalytic mechanism.

It belongs to the uracil-DNA glycosylase (UDG) superfamily. UNG family.

Its subcellular location is the cytoplasm. It carries out the reaction Hydrolyzes single-stranded DNA or mismatched double-stranded DNA and polynucleotides, releasing free uracil.. Excises uracil residues from the DNA which can arise as a result of misincorporation of dUMP residues by DNA polymerase or due to deamination of cytosine. This is Uracil-DNA glycosylase from Campylobacter jejuni subsp. jejuni serotype O:2 (strain ATCC 700819 / NCTC 11168).